We begin with the raw amino-acid sequence, 211 residues long: MPGRERRDGGRSADDNKQNDRNERRGGGRRDDRRNQQQDERSQYIERVVTINRVSKVVKGGRRFSFTALVIVGDGKGMVGVGYGKAKEVPAAIQKGAEEARKNFFRVPMVNGTITHPVQGEKAAGIVMLKPAAPGTGVIAGGAARPVLECAGIQDILSKSLGSDNAINVVHATVDGLKQLVRPEEVAARRGKTIEEVAPARILRARAGQEA.

Positions methionine 1–arginine 41 are disordered. Residues tyrosine 44 to valine 107 enclose the S5 DRBM domain.

Belongs to the universal ribosomal protein uS5 family. Part of the 30S ribosomal subunit. Contacts proteins S4 and S8.

With S4 and S12 plays an important role in translational accuracy. Its function is as follows. Located at the back of the 30S subunit body where it stabilizes the conformation of the head with respect to the body. This chain is Small ribosomal subunit protein uS5, found in Corynebacterium glutamicum (strain R).